The primary structure comprises 212 residues: Phosphatidylserine decarboxylase proenzyme (212 aa).

The active-site Schiff-base intermediate with substrate; via pyruvic acid is Ser182. Ser182 bears the Pyruvic acid (Ser); by autocatalysis mark.

This sequence belongs to the phosphatidylserine decarboxylase family. PSD-A subfamily. In terms of assembly, heterodimer of a large membrane-associated beta subunit and a small pyruvoyl-containing alpha subunit. It depends on pyruvate as a cofactor. Post-translationally, is synthesized initially as an inactive proenzyme. Formation of the active enzyme involves a self-maturation process in which the active site pyruvoyl group is generated from an internal serine residue via an autocatalytic post-translational modification. Two non-identical subunits are generated from the proenzyme in this reaction, and the pyruvate is formed at the N-terminus of the alpha chain, which is derived from the carboxyl end of the proenzyme. The post-translation cleavage follows an unusual pathway, termed non-hydrolytic serinolysis, in which the side chain hydroxyl group of the serine supplies its oxygen atom to form the C-terminus of the beta chain, while the remainder of the serine residue undergoes an oxidative deamination to produce ammonia and the pyruvoyl prosthetic group on the alpha chain.

It is found in the cell membrane. The catalysed reaction is a 1,2-diacyl-sn-glycero-3-phospho-L-serine + H(+) = a 1,2-diacyl-sn-glycero-3-phosphoethanolamine + CO2. It participates in phospholipid metabolism; phosphatidylethanolamine biosynthesis; phosphatidylethanolamine from CDP-diacylglycerol: step 2/2. Catalyzes the formation of phosphatidylethanolamine (PtdEtn) from phosphatidylserine (PtdSer). This Chlorobium limicola (strain DSM 245 / NBRC 103803 / 6330) protein is Phosphatidylserine decarboxylase proenzyme.